The primary structure comprises 433 residues: MYFNVEKVVYEGPSSKNLLAYKFYNPEEEIAGKKMRDWFRFAVAYWHTFNSRGEDPFGSATFERPWFKKDPMDTAFAKVDALFEFCEKTGVEYFTFHDRDLAHEGLTLRESNKILDKVVEKIKEYMKSSNVKLLWGTANLFSHPRYAQGAATSPNPLVFSYAASQVKKMLDVTKELGGLGYVLWGGREGYDNLLLTDSALEEKLFARFLEMVVEYKERIGFNGVLMIEPKPKEPTKHQYDFDASTVLYFLKKHNLFEHFKLNIEANHATLAGHTFAHELRVARLNGKLGSIDANRGDLLLGWDTDQFPTDVYETTFAMYEVLENNGLDCGFNFDAKVRRASIDPEDIVYAHVSSMDAFALGLKLAVKLREKVKPMIEERYSEYNSEIGMKILEGKTTLDELSSYVEDLTDVRVKSLKQELLEMVINDVIFGGR.

Residues His97 and Asp100 contribute to the active site. The Mg(2+) site is built by Glu228, Glu264, His267, Asp292, Asp303, Asp305, and Asp334.

It belongs to the xylose isomerase family. As to quaternary structure, homotetramer. Mg(2+) is required as a cofactor.

The protein localises to the cytoplasm. The enzyme catalyses alpha-D-xylose = alpha-D-xylulofuranose. This Fervidobacterium gondwanense protein is Xylose isomerase.